The following is a 305-amino-acid chain: Ribosomal RNA small subunit methyltransferase H (305 aa).

S-adenosyl-L-methionine-binding positions include 30 to 32 (GGH), Asp49, Phe74, Asp96, and Gln103.

Belongs to the methyltransferase superfamily. RsmH family.

It localises to the cytoplasm. The enzyme catalyses cytidine(1402) in 16S rRNA + S-adenosyl-L-methionine = N(4)-methylcytidine(1402) in 16S rRNA + S-adenosyl-L-homocysteine + H(+). Functionally, specifically methylates the N4 position of cytidine in position 1402 (C1402) of 16S rRNA. The chain is Ribosomal RNA small subunit methyltransferase H from Francisella tularensis subsp. mediasiatica (strain FSC147).